A 79-amino-acid chain; its full sequence is ATP synthase subunit c (79 aa).

The next 2 membrane-spanning stretches (helical) occupy residues isoleucine 11–leucine 31 and phenylalanine 53–tyrosine 73.

The protein belongs to the ATPase C chain family. In terms of assembly, F-type ATPases have 2 components, F(1) - the catalytic core - and F(0) - the membrane proton channel. F(1) has five subunits: alpha(3), beta(3), gamma(1), delta(1), epsilon(1). F(0) has three main subunits: a(1), b(2) and c(10-14). The alpha and beta chains form an alternating ring which encloses part of the gamma chain. F(1) is attached to F(0) by a central stalk formed by the gamma and epsilon chains, while a peripheral stalk is formed by the delta and b chains.

It localises to the cell inner membrane. Its function is as follows. F(1)F(0) ATP synthase produces ATP from ADP in the presence of a proton or sodium gradient. F-type ATPases consist of two structural domains, F(1) containing the extramembraneous catalytic core and F(0) containing the membrane proton channel, linked together by a central stalk and a peripheral stalk. During catalysis, ATP synthesis in the catalytic domain of F(1) is coupled via a rotary mechanism of the central stalk subunits to proton translocation. In terms of biological role, key component of the F(0) channel; it plays a direct role in translocation across the membrane. A homomeric c-ring of between 10-14 subunits forms the central stalk rotor element with the F(1) delta and epsilon subunits. The polypeptide is ATP synthase subunit c (Blochmanniella floridana).